Reading from the N-terminus, the 465-residue chain is Citrate synthase-like protein (465 aa).

A disordered region spans residues 13–40 (HISDMVDSTKMNGNQSQDTAGRADTPVS). Over residues 21–31 (TKMNGNQSQDT) the composition is skewed to polar residues. Catalysis depends on residues His-357 and Asp-413.

It belongs to the citrate synthase family.

The protein operates within secondary metabolite biosynthesis. In terms of biological role, citrate synthase-like protein; part of the gene cluster that mediates the biosynthesis of squalestatin S1 (SQS1, also known as zaragozic acid A), a heavily oxidized fungal polyketide that offers potent cholesterol lowering activity by targeting squalene synthase (SS). SQS1 is composed of a 2,8-dioxobicyclic[3.2.1]octane-3,4,5-tricarboxyclic acid core that is connected to two lipophilic polyketide arms. These initial steps feature the priming of an unusual benzoic acid starter unit onto the highly reducing polyketide synthase pks2, followed by oxaloacetate extension and product release to generate a tricarboxylic acid containing product. The phenylalanine ammonia lyase (PAL) M7 and the acyl-CoA ligase M9 are involved in transforming phenylalanine into benzoyl-CoA. The citrate synthase-like protein R3 is involved in connecting the C-alpha-carbons of the hexaketide chain and oxaloacetate to afford the tricarboxylic acid unit. The potential hydrolytic enzymes, M8 and M10, are in close proximity to pks2 and may participate in product release. On the other side, the tetraketide arm is synthesized by a the squalestatin tetraketide synthase pks1 and enzymatically esterified to the core in the last biosynthetic step, by the acetyltransferase M4. The biosynthesis of the tetraketide must involve 3 rounds of chain extension. After the first and second rounds methyl-transfer occurs, and in all rounds of extension the ketoreductase and dehydratase are active. The enoyl reductase and C-MeT of pks1 are not active in the final round of extension. The acetyltransferase M4 appears to have a broad substrate selectivity for its acyl CoA substrate, allowing the in vitro synthesis of novel squalestatins. The biosynthesis of SQS1 requires several oxidative steps likely performed by oxidoreductases M1, R1 and R2. Finally, in support of the identification of the cluster as being responsible for SQS1 production, the cluster contains a gene encoding a putative squalene synthase (SS) R6, suggesting a likely mechanism for self-resistance. This is Citrate synthase-like protein from Phoma sp. (strain ATCC 20986 / MF5453).